Consider the following 877-residue polypeptide: DNA polymerase I (877 aa).

Positions 1 to 310 (MKKKLVLIDG…FTLADRVTEE (310 aa)) constitute a 5'-3' exonuclease domain. The region spanning 311–465 (MLADKAALVV…ALERPFLDEL (155 aa)) is the 3'-5' exonuclease domain. A polymerase region spans residues 469–877 (EQDRLLVELE…HYGSTWYDAK (409 aa)).

The protein belongs to the DNA polymerase type-A family. As to quaternary structure, single-chain monomer with multiple functions.

It catalyses the reaction DNA(n) + a 2'-deoxyribonucleoside 5'-triphosphate = DNA(n+1) + diphosphate. Functionally, in addition to polymerase activity, this DNA polymerase exhibits 3'-5' and 5'-3' exonuclease activity. In Bacillus caldotenax, this protein is DNA polymerase I (polA).